Consider the following 429-residue polypeptide: Enolase (429 aa).

Residue Q163 participates in (2R)-2-phosphoglycerate binding. E205 functions as the Proton donor in the catalytic mechanism. Mg(2+) contacts are provided by D242, E285, and D312. K337, R366, S367, and K388 together coordinate (2R)-2-phosphoglycerate. The Proton acceptor role is filled by K337.

It belongs to the enolase family. Requires Mg(2+) as cofactor.

The protein resides in the cytoplasm. Its subcellular location is the secreted. It is found in the cell surface. The enzyme catalyses (2R)-2-phosphoglycerate = phosphoenolpyruvate + H2O. It functions in the pathway carbohydrate degradation; glycolysis; pyruvate from D-glyceraldehyde 3-phosphate: step 4/5. Catalyzes the reversible conversion of 2-phosphoglycerate (2-PG) into phosphoenolpyruvate (PEP). It is essential for the degradation of carbohydrates via glycolysis. The polypeptide is Enolase (Methylorubrum populi (strain ATCC BAA-705 / NCIMB 13946 / BJ001) (Methylobacterium populi)).